The primary structure comprises 226 residues: 2,3-bisphosphoglycerate-dependent phosphoglycerate mutase (226 aa).

Substrate contacts are provided by residues 8-15 (RHGQSVWN), 21-22 (TG), arginine 58, 109-112 (ERMY), lysine 120, 136-137 (RR), and 180-181 (GN). Histidine 9 (tele-phosphohistidine intermediate) is an active-site residue. Glutamate 109 (proton donor/acceptor) is an active-site residue.

Belongs to the phosphoglycerate mutase family. BPG-dependent PGAM subfamily.

The enzyme catalyses (2R)-2-phosphoglycerate = (2R)-3-phosphoglycerate. Its pathway is carbohydrate degradation; glycolysis; pyruvate from D-glyceraldehyde 3-phosphate: step 3/5. Functionally, catalyzes the interconversion of 2-phosphoglycerate and 3-phosphoglycerate. In Chlamydia muridarum (strain MoPn / Nigg), this protein is 2,3-bisphosphoglycerate-dependent phosphoglycerate mutase.